Here is a 484-residue protein sequence, read N- to C-terminus: Replication-associated protein (484 aa).

The Nuclear localization signal motif lies at isoleucine 146–valine 153.

Its subcellular location is the host nucleus. Its function is as follows. Plays an essential for the replication of viral DNA. Presumably cleaves viral genomic dsRNA replicative form to initiate rolling circle replication. This is Replication-associated protein from Chaetoceros (Chaetoceros sp. DNA virus 7).